A 330-amino-acid chain; its full sequence is GTPase Obg (330 aa).

An Obg domain is found at 1-159 (MQFIDQARIT…WPLQLELKLL (159 aa)). In terms of domain architecture, OBG-type G spans 160–328 (AEVGIIGLPN…LLERVWKELG (169 aa)). Residues 166 to 173 (GLPNAGKS), 191 to 195 (FTTLV), 213 to 216 (DIPG), 280 to 283 (NKQE), and 309 to 311 (SAA) contribute to the ATP site. Residues serine 173 and threonine 193 each contribute to the Mg(2+) site.

It belongs to the TRAFAC class OBG-HflX-like GTPase superfamily. OBG GTPase family. In terms of assembly, monomer. Mg(2+) serves as cofactor.

It localises to the cytoplasm. An essential GTPase which binds GTP, GDP and possibly (p)ppGpp with moderate affinity, with high nucleotide exchange rates and a fairly low GTP hydrolysis rate. Plays a role in control of the cell cycle, stress response, ribosome biogenesis and in those bacteria that undergo differentiation, in morphogenesis control. The polypeptide is GTPase Obg (Parasynechococcus marenigrum (strain WH8102)).